Consider the following 356-residue polypeptide: uncharacterized protein (356 aa).

Residues 25–72 form a disordered region; the sequence is EENNQENNKKFIEEFYPDKESDKNFSDDDSDDSDDSDDSENSDEEFDN. Positions 31 to 50 are enriched in basic and acidic residues; sequence NNKKFIEEFYPDKESDKNFS. Over residues 51 to 70 the composition is skewed to acidic residues; sequence DDDSDDSDDSDDSENSDEEF. A coiled-coil region spans residues 328–356; the sequence is EDTLNHSHSNKIKELENKITELKYQNEIN.

This sequence belongs to the mimivirus L17/R827 family.

This is an uncharacterized protein from Acanthamoeba polyphaga mimivirus (APMV).